The sequence spans 119 residues: Divalent-cation tolerance protein CutA (119 aa).

Residues cysteine 23, histidine 90, and histidine 91 each contribute to the Cu cation site.

Belongs to the CutA family. In terms of assembly, homotrimer. Requires Cu cation as cofactor.

The protein resides in the cytoplasm. In terms of biological role, involved in resistance toward heavy metals. In Yersinia pseudotuberculosis serotype O:1b (strain IP 31758), this protein is Divalent-cation tolerance protein CutA.